Consider the following 81-residue polypeptide: Defensin-like protein 130 (81 aa).

The N-terminal stretch at 1–21 (MTKNTSLTIFMVVLVIGMLYT) is a signal peptide. 4 disulfides stabilise this stretch: Cys-32–Cys-81, Cys-41–Cys-63, Cys-46–Cys-75, and Cys-50–Cys-77.

Belongs to the DEFL family.

The protein localises to the secreted. This chain is Defensin-like protein 130 (LCR28), found in Arabidopsis thaliana (Mouse-ear cress).